The primary structure comprises 501 residues: Type II secretion system protein E (501 aa).

Glycine 262–serine 269 is an ATP binding site. 4 residues coordinate Zn(2+): cysteine 395, cysteine 398, cysteine 428, and cysteine 431.

It belongs to the GSP E family. In terms of assembly, forms homooligomers; most probably hexamers. Interacts with ExeL/GspL. Requires Zn(2+) as cofactor.

The protein resides in the cell inner membrane. It catalyses the reaction ATP + H2O + cellular proteinSide 1 = ADP + phosphate + cellular proteinSide 2.. In terms of biological role, ATPase component of the type II secretion system required for the energy-dependent secretion of extracellular factors such as proteases and toxins from the periplasm. Acts as a molecular motor to provide the energy that is required for assembly of the pseudopilus and the extrusion of substrates generated in the cytoplasm. The chain is Type II secretion system protein E (exeE) from Aeromonas hydrophila.